The following is a 497-amino-acid chain: MDARLTVLTAFPPAAGIDNEEYYQNSQQHAKRVRELVRDNAQWIRESADDILKHVNPAVYSLSYLMILEFLLQSPGWTSQQAHESLASYMAQFFLQFDARQIRCKGSTWSDVLKEAYSERGLFPASVAVELVTAALLRLDPSGSIITSHHCNLVELAYNTGNVGALLPLIEKPIIYMPAKGMSTAQPLCDMSLPPPAYINPDSQLTDALTSAAVLQYDFLCGLCFIERRMWQQAFDAFERCVTYPTRDGGCSKIMTEAYNKWILVGLLLTGKPPTLPETTSQAAKKIFATQGKPYKLFAQAFKSETAGDLVREFEVINSELLPNEGNVELAKLVLAHYQRWQIINLRNIYTNISLEKIQERTQSAETGAPLPTVEAVDQLVQSMIADGSLQGAIERPKDGSPAYLTFLSSPAQGMSEVEFSAQVNKVMQGIKALEPIIEATNKRLASNREYISHTVKRQFDAAREHKLGLQSAGGGFEESSFHIEEEEDLMSGLPAH.

Residues 233 to 408 form the PCI domain; it reads QAFDAFERCV…DGSPAYLTFL (176 aa).

This sequence belongs to the CSN3 family. Component of the COP9 signalosome (CSN) complex.

Its subcellular location is the cytoplasm. It is found in the nucleus. In terms of biological role, component of the COP9 signalosome (CSN) complex that acts as an regulator of the ubiquitin (Ubl) conjugation pathway by mediating the deneddylation of the cullin subunit of SCF-type E3 ubiquitin-protein ligase complexes. The CSN complex is involved in the regulation of the circadian clock through its control of the stability of the SCF(FWD1) complex. In Neurospora crassa (strain ATCC 24698 / 74-OR23-1A / CBS 708.71 / DSM 1257 / FGSC 987), this protein is COP9 signalosome complex subunit 3 (csn-3).